A 231-amino-acid polypeptide reads, in one-letter code: LexA repressor (231 aa).

Positions 26-46 form a DNA-binding region, H-T-H motif; sequence FDEMKLALDLRSKSGIHRLIT. Residues 79–98 are disordered; that stretch reads VGFQPRVIDGDRPDRPRPAN. The segment covering 86-95 has biased composition (basic and acidic residues); sequence IDGDRPDRPR. Catalysis depends on for autocatalytic cleavage activity residues Ser-152 and Lys-190.

This sequence belongs to the peptidase S24 family. Homodimer.

The enzyme catalyses Hydrolysis of Ala-|-Gly bond in repressor LexA.. Functionally, represses a number of genes involved in the response to DNA damage (SOS response), including recA and lexA. In the presence of single-stranded DNA, RecA interacts with LexA causing an autocatalytic cleavage which disrupts the DNA-binding part of LexA, leading to derepression of the SOS regulon and eventually DNA repair. This is LexA repressor from Ruegeria pomeroyi (strain ATCC 700808 / DSM 15171 / DSS-3) (Silicibacter pomeroyi).